A 79-amino-acid chain; its full sequence is MKTIMIRDDVYKKLLEIKGDKSFSEIIEELIEESLSVRRKKIEKYFGILNEEEARGLAKEIEEMRKRTDEDIARKLSNY.

The protein belongs to the UPF0330 family.

Functionally, possibly the antitoxin component of a type II toxin-antitoxin (TA) system. Its cognate toxin is VapC12 (Potential). In Sulfurisphaera tokodaii (strain DSM 16993 / JCM 10545 / NBRC 100140 / 7) (Sulfolobus tokodaii), this protein is Putative antitoxin VapB12 (vapB12).